Reading from the N-terminus, the 329-residue chain is DNA-directed RNA polymerase subunit alpha (329 aa).

The alpha N-terminal domain (alpha-NTD) stretch occupies residues 1-235 (MQGSVTEFLK…EQLDAFVDLR (235 aa)). The segment at 249–329 (FDPILLRPVD…NWPPASIAED (81 aa)) is alpha C-terminal domain (alpha-CTD).

This sequence belongs to the RNA polymerase alpha chain family. Homodimer. The RNAP catalytic core consists of 2 alpha, 1 beta, 1 beta' and 1 omega subunit. When a sigma factor is associated with the core the holoenzyme is formed, which can initiate transcription.

The enzyme catalyses RNA(n) + a ribonucleoside 5'-triphosphate = RNA(n+1) + diphosphate. In terms of biological role, DNA-dependent RNA polymerase catalyzes the transcription of DNA into RNA using the four ribonucleoside triphosphates as substrates. The protein is DNA-directed RNA polymerase subunit alpha of Histophilus somni (strain 129Pt) (Haemophilus somnus).